Here is a 180-residue protein sequence, read N- to C-terminus: Transmembrane protein 190 (180 aa).

Residues 1-21 (MVGSGIPALGLLLLMQGSADG) form the signal peptide. Topologically, residues 22 to 81 (NGIQGFFYPWSCEGDVWDRESCGGQAAIENPNLCLRLRCCYRDGVCYHQRPDENMRRKHM) are extracellular. Positions 31–71 (WSCEGDVWDRESCGGQAAIENPNLCLRLRCCYRDGVCYHQR) constitute a P-type domain. Cystine bridges form between Cys33-Cys61, Cys43-Cys60, and Cys55-Cys67. Residues 82–102 (WALGWTCGGLLFLITSICLFW) traverse the membrane as a helical segment. Residues 103 to 180 (WARRHDMLRL…EETEGGDEDD (78 aa)) are Cytoplasmic-facing. Positions 131-140 (KDRTPSEKKT) are enriched in basic and acidic residues. The disordered stretch occupies residues 131-180 (KDRTPSEKKTPSVGSIPPAAPTEGALDVSGGTEGEGTEGGEETEGGDEDD). Residues 165-180 (EGTEGGEETEGGDEDD) show a composition bias toward acidic residues.

The protein localises to the membrane. This chain is Transmembrane protein 190 (TMEM190), found in Bos taurus (Bovine).